Reading from the N-terminus, the 439-residue chain is Trigger factor (439 aa).

The 86-residue stretch at 165-250 folds into the PPIase FKBP-type domain; it reads GDFAKFDFEG…LHEIQELKLP (86 aa).

The protein belongs to the FKBP-type PPIase family. Tig subfamily.

The protein localises to the cytoplasm. The enzyme catalyses [protein]-peptidylproline (omega=180) = [protein]-peptidylproline (omega=0). Involved in protein export. Acts as a chaperone by maintaining the newly synthesized protein in an open conformation. Functions as a peptidyl-prolyl cis-trans isomerase. This Campylobacter lari (strain RM2100 / D67 / ATCC BAA-1060) protein is Trigger factor.